A 625-amino-acid chain; its full sequence is Probable potassium transport system protein Kup 2 (625 aa).

12 consecutive transmembrane segments (helical) span residues 15–35 (LSFA…LYAF), 52–72 (ILSL…LVIV), 98–118 (GGWL…DGML), 134–154 (LSPN…FFLF), 164–184 (IGVY…ILGF), 212–232 (LALF…ALFA), 246–266 (WFAV…ALVL), 284–304 (FLPV…QAII), 336–356 (VYLP…VVIF), 365–385 (AYGI…GIIA), 394–414 (FKIL…AGNI), and 417–437 (LLTG…VMYT).

The protein belongs to the HAK/KUP transporter (TC 2.A.72) family.

It localises to the cell inner membrane. The catalysed reaction is K(+)(in) + H(+)(in) = K(+)(out) + H(+)(out). Functionally, transport of potassium into the cell. Likely operates as a K(+):H(+) symporter. This chain is Probable potassium transport system protein Kup 2, found in Legionella pneumophila (strain Corby).